We begin with the raw amino-acid sequence, 304 residues long: Glutamyl-Q tRNA(Asp) synthetase (304 aa).

Residues 14–18 and Glu-50 each bind L-glutamate; that span reads RFAPS. A 'HIGH' region motif is present at residues 17-27; sequence PSPSGPLHFGS. Residues Cys-106, Cys-108, Tyr-120, and Cys-124 each contribute to the Zn(2+) site. 2 residues coordinate L-glutamate: Tyr-178 and Arg-196. A 'KMSKS' region motif is present at residues 234–238; that stretch reads KLSKQ. Lys-237 is an ATP binding site.

The protein belongs to the class-I aminoacyl-tRNA synthetase family. GluQ subfamily. Zn(2+) is required as a cofactor.

In terms of biological role, catalyzes the tRNA-independent activation of glutamate in presence of ATP and the subsequent transfer of glutamate onto a tRNA(Asp). Glutamate is transferred on the 2-amino-5-(4,5-dihydroxy-2-cyclopenten-1-yl) moiety of the queuosine in the wobble position of the QUC anticodon. The sequence is that of Glutamyl-Q tRNA(Asp) synthetase from Vibrio cholerae serotype O1 (strain ATCC 39315 / El Tor Inaba N16961).